A 736-amino-acid chain; its full sequence is Elongation factor 2 (736 aa).

Residues 19-262 form the tr-type G domain; sequence DQIRNIGIIA…MVIKFVPNPR (244 aa). GTP contacts are provided by residues 28–35, 94–98, and 148–151; these read AHVDHGKT, DTPGH, and NKVD. At histidine 602 the chain carries Diphthamide.

This sequence belongs to the TRAFAC class translation factor GTPase superfamily. Classic translation factor GTPase family. EF-G/EF-2 subfamily.

Its subcellular location is the cytoplasm. In terms of biological role, catalyzes the GTP-dependent ribosomal translocation step during translation elongation. During this step, the ribosome changes from the pre-translocational (PRE) to the post-translocational (POST) state as the newly formed A-site-bound peptidyl-tRNA and P-site-bound deacylated tRNA move to the P and E sites, respectively. Catalyzes the coordinated movement of the two tRNA molecules, the mRNA and conformational changes in the ribosome. This is Elongation factor 2 (fusA) from Aeropyrum pernix (strain ATCC 700893 / DSM 11879 / JCM 9820 / NBRC 100138 / K1).